The chain runs to 486 residues: Serine/threonine-protein kinase 32C (486 aa).

Residues 1–56 form a disordered region; it reads MRSGAERRGSSAAASPGSPPPGRARPAGSDAPSALPPPAAGQPRARDSGDVRSQPR. Serine 10, serine 15, and serine 18 each carry phosphoserine. Residues 24 to 33 show a composition bias toward low complexity; the sequence is ARPAGSDAPS. In terms of domain architecture, Protein kinase spans 93–353; it reads FQILRAIGKG…LQDVQAAPAL (261 aa). ATP contacts are provided by residues 99–107 and lysine 122; that span reads IGKGSFGKV. Aspartate 216 (proton acceptor) is an active-site residue. The segment covering 396–405 has biased composition (basic residues); it reads HKKKKRLAKN. Disordered stretches follow at residues 396–419 and 444–486; these read HKKKKRLAKNKSRDNSRDSSQSEN and SQDL…AGSG.

This sequence belongs to the protein kinase superfamily. Ser/Thr protein kinase family. Mg(2+) serves as cofactor.

It carries out the reaction L-seryl-[protein] + ATP = O-phospho-L-seryl-[protein] + ADP + H(+). It catalyses the reaction L-threonyl-[protein] + ATP = O-phospho-L-threonyl-[protein] + ADP + H(+). The polypeptide is Serine/threonine-protein kinase 32C (Homo sapiens (Human)).